The following is a 361-amino-acid chain: Protein RecA (361 aa).

Position 77–84 (77–84) interacts with ATP; sequence GPESSGKT.

Belongs to the RecA family.

The protein resides in the cytoplasm. Can catalyze the hydrolysis of ATP in the presence of single-stranded DNA, the ATP-dependent uptake of single-stranded DNA by duplex DNA, and the ATP-dependent hybridization of homologous single-stranded DNAs. It interacts with LexA causing its activation and leading to its autocatalytic cleavage. This Rhizobium etli protein is Protein RecA.